Reading from the N-terminus, the 259-residue chain is L-arginine-binding protein (259 aa).

Residues 1–21 (MKKLALLGALALSVLSLPTFA) form the signal peptide.

Belongs to the bacterial solute-binding protein 3 family.

The protein localises to the periplasm. Functionally, binds L-arginine with high affinity. Shows no measurable affinity for L-ornithine. This is L-arginine-binding protein from Pseudomonas aeruginosa (strain ATCC 15692 / DSM 22644 / CIP 104116 / JCM 14847 / LMG 12228 / 1C / PRS 101 / PAO1).